Consider the following 539-residue polypeptide: Eukaryotic translation initiation factor 3 subunit L (539 aa).

Residues 306 to 514 (TFSDILLYIQ…IHIADTKVSH (209 aa)) enclose the PCI domain.

Belongs to the eIF-3 subunit L family. As to quaternary structure, component of the eukaryotic translation initiation factor 3 (eIF-3) complex. The eIF-3 complex interacts with pix.

It localises to the cytoplasm. Functionally, component of the eukaryotic translation initiation factor 3 (eIF-3) complex, which is involved in protein synthesis of a specialized repertoire of mRNAs and, together with other initiation factors, stimulates binding of mRNA and methionyl-tRNAi to the 40S ribosome. The eIF-3 complex specifically targets and initiates translation of a subset of mRNAs involved in cell proliferation. In Drosophila ananassae (Fruit fly), this protein is Eukaryotic translation initiation factor 3 subunit L.